A 306-amino-acid polypeptide reads, in one-letter code: Ribosomal protein L11 methyltransferase (306 aa).

S-adenosyl-L-methionine-binding residues include Thr154, Gly179, Asp201, and Asn242.

It belongs to the methyltransferase superfamily. PrmA family.

The protein resides in the cytoplasm. The enzyme catalyses L-lysyl-[protein] + 3 S-adenosyl-L-methionine = N(6),N(6),N(6)-trimethyl-L-lysyl-[protein] + 3 S-adenosyl-L-homocysteine + 3 H(+). In terms of biological role, methylates ribosomal protein L11. In Xylella fastidiosa (strain Temecula1 / ATCC 700964), this protein is Ribosomal protein L11 methyltransferase.